Reading from the N-terminus, the 2979-residue chain is Polyketide synthase-nonribosomal peptide synthetase TwmB (2979 aa).

Residues 5–435 (GAEIAIIGSG…GTNAHAILES (431 aa)) form the Ketosynthase family 3 (KS3) domain. Active-site for beta-ketoacyl synthase activity residues include cysteine 176, histidine 315, and histidine 355. The tract at residues 549-864 (VFTGQGAQWA…PYTGLFTRGV (316 aa)) is malonyl-CoA:ACP transacylase (MAT) domain. The active-site For malonyltransferase activity is serine 643. The tract at residues 936-1070 (HDLLGHLTPN…GRVRIHLGEA (135 aa)) is N-terminal hotdog fold. A dehydratase (DH) domain region spans residues 936–1234 (HDLLGHLTPN…ECVPFSRQTA (299 aa)). Residues 936-1235 (HDLLGHLTPN…CVPFSRQTAK (300 aa)) form the PKS/mFAS DH domain. The active-site Proton acceptor; for dehydratase activity is histidine 968. The interval 1085 to 1235 (LVSVSEKKFY…CVPFSRQTAK (151 aa)) is C-terminal hotdog fold. The Proton donor; for dehydratase activity role is filled by aspartate 1141. The tract at residues 1387-1572 (NFTAHLAGIL…GIDTSTVEQP (186 aa)) is inactive methyltransferase (MT) domain. Positions 2098 to 2271 (TYWLVGLTGG…AASVMDIGAV (174 aa)) are ketoreductase (KR)domain. Residues 2380 to 2465 (RNNEEAYGIV…ELVDTATEAI (86 aa)) form the Carrier domain. O-(pantetheine 4'-phosphoryl)serine is present on serine 2425. A disordered region spans residues 2476–2497 (YPAEQTSSQNSDSGQDMASSFD). Polar residues predominate over residues 2479–2497 (EQTSSQNSDSGQDMASSFD). The interval 2534–2970 (KSIPVSFTQA…MTLGQAALAE (437 aa)) is condensation.

As to quaternary structure, interacts with TwmE. The cofactor is pantetheine 4'-phosphate.

The catalysed reaction is 5-aminopentanoate + 7 malonyl-CoA + acetyl-CoA + 11 NADPH + 17 H(+) = wortmanamide A + 7 CO2 + 11 NADP(+) + 8 CoA + 6 H2O. The enzyme catalyses 5-aminopentanoate + 8 malonyl-CoA + acetyl-CoA + 13 NADPH + 20 H(+) = wortmanamide B + 8 CO2 + 13 NADP(+) + 9 CoA + 7 H2O. Its pathway is secondary metabolite biosynthesis. Functionally, polyketide synthase-nonribosomal peptide synthetase; part of the gene cluster that mediates the biosynthesis of wortmanamides A and B, reduced long-chain polyketides amidated with a specific omega-amino acid, 5-aminopentanoic acid (5PA). The PKS modules of TwmB are involved in the synthesis of the polyketide backbone, whereas the non-canonical C domain of TwmB is a bonafide condensation domain that specifically selects 5PA and catalyzes amidation to release polyketide chain. The C domain clearly prefers C16 and C18 fatty acyl substrates, which is consistent with simultaneous formation of both octaketide and nonaketide acyl amides wortmanamides A and B. Because TwmB lacks a designated enoylreductase (ER) domain, the required activity is provided the enoyl reductase TwmE. The roles of the remaining enzymes have still to be clarified. The polypeptide is Polyketide synthase-nonribosomal peptide synthetase TwmB (Talaromyces wortmannii (Penicillium wortmannii)).